A 182-amino-acid polypeptide reads, in one-letter code: Ribosome-recycling factor (182 aa).

This sequence belongs to the RRF family.

It localises to the cytoplasm. Responsible for the release of ribosomes from messenger RNA at the termination of protein biosynthesis. May increase the efficiency of translation by recycling ribosomes from one round of translation to another. The sequence is that of Ribosome-recycling factor from Synechocystis sp. (strain ATCC 27184 / PCC 6803 / Kazusa).